Here is a 135-residue protein sequence, read N- to C-terminus: Kappa-casein (135 aa).

An O-linked (GalNAc...) threonine glycan is attached at Thr96. Ser114 is subject to Phosphoserine; alternate. O-linked (GalNAc...) serine; alternate glycosylation occurs at Ser114. Thr131 is a glycosylation site (O-linked (GalNAc...) threonine). Ser132 carries the post-translational modification Phosphoserine.

The protein belongs to the kappa-casein family. As to expression, mammary gland specific. Secreted in milk.

It localises to the secreted. Its function is as follows. Kappa-casein stabilizes micelle formation, preventing casein precipitation in milk. The polypeptide is Kappa-casein (CSN3) (Equus grevyi (Grevy's zebra)).